Reading from the N-terminus, the 92-residue chain is Probable Fe(2+)-trafficking protein (92 aa).

The protein belongs to the Fe(2+)-trafficking protein family.

Functionally, could be a mediator in iron transactions between iron acquisition and iron-requiring processes, such as synthesis and/or repair of Fe-S clusters in biosynthetic enzymes. The protein is Probable Fe(2+)-trafficking protein of Xanthomonas oryzae pv. oryzae (strain MAFF 311018).